A 509-amino-acid chain; its full sequence is ATP synthase subunit alpha (509 aa).

169–176 (GDRQTGKT) lines the ATP pocket.

It belongs to the ATPase alpha/beta chains family. F-type ATPases have 2 components, CF(1) - the catalytic core - and CF(0) - the membrane proton channel. CF(1) has five subunits: alpha(3), beta(3), gamma(1), delta(1), epsilon(1). CF(0) has three main subunits: a(1), b(2) and c(9-12). The alpha and beta chains form an alternating ring which encloses part of the gamma chain. CF(1) is attached to CF(0) by a central stalk formed by the gamma and epsilon chains, while a peripheral stalk is formed by the delta and b chains.

The protein resides in the cell inner membrane. It carries out the reaction ATP + H2O + 4 H(+)(in) = ADP + phosphate + 5 H(+)(out). Functionally, produces ATP from ADP in the presence of a proton gradient across the membrane. The alpha chain is a regulatory subunit. The sequence is that of ATP synthase subunit alpha from Chelativorans sp. (strain BNC1).